The chain runs to 479 residues: Ribulose bisphosphate carboxylase large chain 2 (479 aa).

Substrate contacts are provided by Asn-116 and Thr-166. Lys-168 serves as the catalytic Proton acceptor. Lys-170 provides a ligand contact to substrate. 3 residues coordinate Mg(2+): Lys-194, Asp-196, and Glu-197. At Lys-194 the chain carries N6-carboxylysine. His-287 functions as the Proton acceptor in the catalytic mechanism. 3 residues coordinate substrate: Arg-288, His-320, and Ser-372.

The protein belongs to the RuBisCO large chain family. Type I subfamily. In terms of assembly, heterohexadecamer of 8 large chains and 8 small chains. Mg(2+) is required as a cofactor.

The enzyme catalyses 2 (2R)-3-phosphoglycerate + 2 H(+) = D-ribulose 1,5-bisphosphate + CO2 + H2O. It carries out the reaction D-ribulose 1,5-bisphosphate + O2 = 2-phosphoglycolate + (2R)-3-phosphoglycerate + 2 H(+). RuBisCO catalyzes two reactions: the carboxylation of D-ribulose 1,5-bisphosphate, the primary event in carbon dioxide fixation, as well as the oxidative fragmentation of the pentose substrate. Both reactions occur simultaneously and in competition at the same active site. This chain is Ribulose bisphosphate carboxylase large chain 2, found in Bradyrhizobium sp. (strain ORS 278).